Consider the following 117-residue polypeptide: UPF0342 protein LEUM_1212 (117 aa).

The protein belongs to the UPF0342 family.

The polypeptide is UPF0342 protein LEUM_1212 (Leuconostoc mesenteroides subsp. mesenteroides (strain ATCC 8293 / DSM 20343 / BCRC 11652 / CCM 1803 / JCM 6124 / NCDO 523 / NBRC 100496 / NCIMB 8023 / NCTC 12954 / NRRL B-1118 / 37Y)).